The sequence spans 260 residues: Indole-3-glycerol phosphate synthase (260 aa).

The protein belongs to the TrpC family.

The catalysed reaction is 1-(2-carboxyphenylamino)-1-deoxy-D-ribulose 5-phosphate + H(+) = (1S,2R)-1-C-(indol-3-yl)glycerol 3-phosphate + CO2 + H2O. It functions in the pathway amino-acid biosynthesis; L-tryptophan biosynthesis; L-tryptophan from chorismate: step 4/5. This chain is Indole-3-glycerol phosphate synthase, found in Staphylococcus haemolyticus (strain JCSC1435).